The primary structure comprises 519 residues: Dihydropyrimidinase (519 aa).

2 residues coordinate Zn(2+): His67 and His69. Ser79 is modified (phosphoserine). Lys159 is a binding site for Zn(2+). Lys159 carries the post-translational modification N6-carboxylysine. Residue Tyr164 participates in substrate binding. 2 residues coordinate Zn(2+): His192 and His248. N6-succinyllysine is present on Lys256. Residue Asp326 coordinates Zn(2+). Asn347 provides a ligand contact to substrate. The residue at position 510 (Thr510) is a Phosphothreonine.

This sequence belongs to the metallo-dependent hydrolases superfamily. Hydantoinase/dihydropyrimidinase family. As to quaternary structure, homotetramer. Zn(2+) is required as a cofactor. Carboxylation allows a single lysine to coordinate two zinc ions.

It carries out the reaction 5,6-dihydrouracil + H2O = 3-(carbamoylamino)propanoate + H(+). In terms of biological role, catalyzes the second step of the reductive pyrimidine degradation, the reversible hydrolytic ring opening of dihydropyrimidines. Can catalyze the ring opening of 5,6-dihydrouracil to N-carbamyl-alanine and of 5,6-dihydrothymine to N-carbamyl-amino isobutyrate. In Rattus norvegicus (Rat), this protein is Dihydropyrimidinase (Dpys).